The chain runs to 95 residues: Protein TusB (95 aa).

The protein belongs to the DsrH/TusB family. In terms of assembly, heterohexamer, formed by a dimer of trimers. The hexameric TusBCD complex contains 2 copies each of TusB, TusC and TusD. The TusBCD complex interacts with TusE.

It is found in the cytoplasm. Part of a sulfur-relay system required for 2-thiolation of 5-methylaminomethyl-2-thiouridine (mnm(5)s(2)U) at tRNA wobble positions. In Yersinia enterocolitica serotype O:8 / biotype 1B (strain NCTC 13174 / 8081), this protein is Protein TusB.